A 297-amino-acid chain; its full sequence is 4-hydroxy-tetrahydrodipicolinate synthase (297 aa).

Thr47 contacts pyruvate. Residue Tyr136 is the Proton donor/acceptor of the active site. Lys165 functions as the Schiff-base intermediate with substrate in the catalytic mechanism. Pyruvate is bound at residue Ile206.

This sequence belongs to the DapA family. Homotetramer; dimer of dimers.

Its subcellular location is the cytoplasm. The catalysed reaction is L-aspartate 4-semialdehyde + pyruvate = (2S,4S)-4-hydroxy-2,3,4,5-tetrahydrodipicolinate + H2O + H(+). Its pathway is amino-acid biosynthesis; L-lysine biosynthesis via DAP pathway; (S)-tetrahydrodipicolinate from L-aspartate: step 3/4. Catalyzes the condensation of (S)-aspartate-beta-semialdehyde [(S)-ASA] and pyruvate to 4-hydroxy-tetrahydrodipicolinate (HTPA). The protein is 4-hydroxy-tetrahydrodipicolinate synthase of Campylobacter concisus (strain 13826).